Reading from the N-terminus, the 429-residue chain is MRFHLGLTEALQEREPNINASSKDLSLLHFELYRRSEPIMDIDEESYLNAGPSAPSKIPQGGEGDGLQGMSKKAMKRAAKQARLEEIKPLKRAAERERRRQRTAQLAEGYAAGTLSEADKELVERRRRVEKERKEAQRRIESGDQANDWLGGVVIDLGFDDLMTDQEIASMAQQLGYLYSSNRTAEKPVRTVIHTTFSPAASPRLWQRMENFNWHKWSRCHWWEQGLETLKSQLDPSTSILSVQSVVSKETQDKAGIDTKSLLSRLTGPQVPVDLQAGKHKLVYLSADAEDELLSLSEDEIYIIGGIVDRNRHKNLCQGKAEQLGIRTARLPIGTFLEMLPTRKALTVNQVFDILVKYLHLGDWAAAFEAVIPIRKYAPGRKAKRAKTETKRNEKVEEEVECTSAEGEEDIGVIEESAEVDPEDVFSNQ.

The SAM-dependent MTase TRM10-type domain maps to 131 to 379 (KERKEAQRRI…AVIPIRKYAP (249 aa)). S-adenosyl-L-methionine contacts are provided by residues 285 to 286 (LS), glycine 305, 309 to 313 (DRNRH), cysteine 317, leucine 331, and 344 to 346 (KAL). The active-site Proton acceptor is the aspartate 309. The interval 383–429 (AKRAKTETKRNEKVEEEVECTSAEGEEDIGVIEESAEVDPEDVFSNQ) is disordered. Residues 386 to 395 (AKTETKRNEK) show a composition bias toward basic and acidic residues. Residues 396 to 429 (VEEEVECTSAEGEEDIGVIEESAEVDPEDVFSNQ) are compositionally biased toward acidic residues.

This sequence belongs to the class IV-like SAM-binding methyltransferase superfamily. TRM10 family. In terms of assembly, monomer.

The protein localises to the cytoplasm. It is found in the nucleus. It catalyses the reaction guanosine(9) in tRNA + S-adenosyl-L-methionine = N(1)-methylguanosine(9) in tRNA + S-adenosyl-L-homocysteine + H(+). Its function is as follows. S-adenosyl-L-methionine-dependent guanine N(1)-methyltransferase that catalyzes the formation of N(1)-methylguanine at position 9 (m1G9) in cytoplasmic tRNA. This Cryptococcus neoformans var. neoformans serotype D (strain B-3501A) (Filobasidiella neoformans) protein is tRNA (guanine(9)-N1)-methyltransferase.